The sequence spans 140 residues: Large ribosomal subunit protein uL14 (140 aa).

It belongs to the universal ribosomal protein uL14 family. Part of the 50S ribosomal subunit. Forms a cluster with proteins L3 and L24e, part of which may contact the 16S rRNA in 2 intersubunit bridges.

Binds to 23S rRNA. Forms part of two intersubunit bridges in the 70S ribosome. The sequence is that of Large ribosomal subunit protein uL14 from Staphylothermus marinus (strain ATCC 43588 / DSM 3639 / JCM 9404 / F1).